We begin with the raw amino-acid sequence, 109 residues long: Transcription initiation factor IIA subunit 2 (109 aa).

Belongs to the TFIIA subunit 2 family. TFIIA is a heterodimer composed of the large toa1 and the small toa2 subunits.

Its subcellular location is the nucleus. The protein localises to the cytoplasm. Its function is as follows. TFIIA is a component of the transcription machinery of RNA polymerase II and plays an important role in transcriptional activation. TFIIA in a complex with tbp mediates transcriptional activity. This Schizosaccharomyces pombe (strain 972 / ATCC 24843) (Fission yeast) protein is Transcription initiation factor IIA subunit 2 (toa2).